A 411-amino-acid polypeptide reads, in one-letter code: Tyrosine--tRNA ligase (411 aa).

Tyr36 contacts L-tyrosine. Residues Pro41–His50 carry the 'HIGH' region motif. L-tyrosine is bound by residues Tyr172 and Gln176. Residues Lys232 to Thr236 carry the 'KMSKS' region motif. Lys235 provides a ligand contact to ATP. In terms of domain architecture, S4 RNA-binding spans Tyr344–Ile409.

Belongs to the class-I aminoacyl-tRNA synthetase family. TyrS type 1 subfamily. Homodimer.

The protein localises to the cytoplasm. It carries out the reaction tRNA(Tyr) + L-tyrosine + ATP = L-tyrosyl-tRNA(Tyr) + AMP + diphosphate + H(+). Its function is as follows. Catalyzes the attachment of tyrosine to tRNA(Tyr) in a two-step reaction: tyrosine is first activated by ATP to form Tyr-AMP and then transferred to the acceptor end of tRNA(Tyr). The protein is Tyrosine--tRNA ligase of Malacoplasma penetrans (strain HF-2) (Mycoplasma penetrans).